The primary structure comprises 442 residues: Probable serine/threonine-protein kinase PBL17 (442 aa).

Gly2 carries N-myristoyl glycine lipidation. Cys4 carries S-palmitoyl cysteine lipidation. The residue at position 79 (Thr79) is a Phosphothreonine. Residues 90 to 370 (FRPDYILGEG…NHVVEVLETL (281 aa)) form the Protein kinase domain. ATP is bound by residues 96–104 (LGEGGFGVV) and Lys125. Tyr170 carries the phosphotyrosine modification. Asp220 functions as the Proton acceptor in the catalytic mechanism. Position 254 is a phosphoserine (Ser254). 2 positions are modified to phosphothreonine: Thr255 and Thr260. Tyr268 carries the post-translational modification Phosphotyrosine. A disordered region spans residues 385-442 (HSRGKSVTLYEASSDSQGTRDGNGQRRRRPESGRSKSEAAVDTEKYVSTLSEPDTTKI). Polar residues predominate over residues 395 to 406 (EASSDSQGTRDG). The segment covering 414–429 (PESGRSKSEAAVDTEK) has biased composition (basic and acidic residues). Residues 430 to 442 (YVSTLSEPDTTKI) are compositionally biased toward polar residues.

Belongs to the protein kinase superfamily. Ser/Thr protein kinase family.

The protein resides in the cell membrane. The catalysed reaction is L-seryl-[protein] + ATP = O-phospho-L-seryl-[protein] + ADP + H(+). It catalyses the reaction L-threonyl-[protein] + ATP = O-phospho-L-threonyl-[protein] + ADP + H(+). Its function is as follows. May be involved in plant defense signaling. In Arabidopsis thaliana (Mouse-ear cress), this protein is Probable serine/threonine-protein kinase PBL17.